A 647-amino-acid polypeptide reads, in one-letter code: Meiotically up-regulated protein C8C9.04 (647 aa).

Disordered regions lie at residues 1–241 (MTTN…ELKP) and 387–647 (RAQQ…KLFH). Polar residues predominate over residues 29–46 (KSTNAVEQNNNSSQASVT). Residues 49 to 67 (NKKKAAKRAKKKAAKKKKQ) are compositionally biased toward basic residues. Residues 92–103 (TILQEPGFTQTI) are compositionally biased toward polar residues. Residues 134 to 145 (PSASTSTAVPTT) show a composition bias toward low complexity. Residues 146 to 155 (EARNTSITEP) are compositionally biased toward polar residues. The span at 156 to 177 (ANSPSSSSSSASTKSTATTQSA) shows a compositional bias: low complexity. 2 positions are modified to phosphoserine: serine 162 and serine 165. Residue threonine 168 is modified to Phosphothreonine. The segment covering 193–215 (QLGNSPASITSKPATTSAAQPSS) has biased composition (polar residues). Phosphoserine is present on residues serine 197 and serine 200. Over residues 232-241 (AEKEIPELKP) the composition is skewed to basic and acidic residues. Polar residues-rich tracts occupy residues 390–406 (QPEQ…TETV), 413–432 (VSST…TESE), and 488–508 (PSST…AQSS). At serine 396 the chain carries Phosphoserine. Residues serine 489 and serine 490 each carry the phosphoserine modification. Threonine 491 carries the post-translational modification Phosphothreonine. Residues serine 515, serine 519, and serine 523 each carry the phosphoserine modification. The segment covering 518–530 (ASAPSSPGTTSAA) has biased composition (low complexity). The span at 561–589 (GSATTIPSPGSATTKPTPGSATTKPTPVS) shows a compositional bias: polar residues. The segment covering 596-613 (AGTTKPAPAAGATATAEN) has biased composition (low complexity). A compositionally biased stretch (basic residues) spans 633–647 (SWFKRMKKSFGKLFH).

In terms of biological role, has a role in meiosis and sporulation. The polypeptide is Meiotically up-regulated protein C8C9.04 (Schizosaccharomyces pombe (strain 972 / ATCC 24843) (Fission yeast)).